We begin with the raw amino-acid sequence, 318 residues long: Aquaporin-1 (318 aa).

The span at 1–16 (MVQFGSRANTNMTGLP) shows a compositional bias: polar residues. Positions 1–27 (MVQFGSRANTNMTGLPTEQAVEDRRVG) are disordered. At 1–36 (MVQFGSRANTNMTGLPTEQAVEDRRVGNPKRDRMRN) the chain is on the cytoplasmic side. Residues 37–57 (ALVIVLGEFCGTFMFLLLSFI) form a helical membrane-spanning segment. The Extracellular portion of the chain corresponds to 58–77 (GAQTALVTNSPSDAGSPLLP). Residues 78–98 (FSLMYIAASFGTALAVNVWIF) traverse the membrane as a helical segment. The Cytoplasmic segment spans residues 99-108 (YRVSGGMFNP). Positions 107–109 (NPA) match the NPA 1 motif. Residues 109-129 (AVTLGLVLVGAVTPIHALLII) traverse the membrane as a helical segment. Over 130–165 (PTQLVAAITAAGITDALLPGKLLVTNALGNGTSVAQ) the chain is Extracellular. Asn-159 carries N-linked (GlcNAc...) asparagine glycosylation. The helical transmembrane segment at 166 to 186 (GVFIEMFLTSQLVLTVYFLAV) threads the bilayer. Over 187-193 (EKHRSTH) the chain is Cytoplasmic. Residues 194–214 (LAPIGIGISVFIAHICATNWT) form a helical membrane-spanning segment. At 215–236 (GTSINPARSFGPSVVAGFHGYD) the chain is on the extracellular side. The short motif at 219–221 (NPA) is the NPA 2 element. The chain crosses the membrane as a helical span at residues 237–257 (WIYYIGPFMGSLLAFGCYKIF). Residues 258 to 318 (KVLEYQTANP…NDSVIDDQMV (61 aa)) lie on the Cytoplasmic side of the membrane. Positions 268–318 (GQDDDNLDRSGHHHFFGHRKEPMPHTHTDNIEPKDHGVPQRNDSVIDDQMV) are disordered. The segment covering 285 to 305 (HRKEPMPHTHTDNIEPKDHGV) has biased composition (basic and acidic residues).

The protein belongs to the MIP/aquaporin (TC 1.A.8) family.

Its subcellular location is the nucleus membrane. It carries out the reaction H2O(in) = H2O(out). In terms of biological role, probable water channel involved in responses to changes in environmental conditions and conidiation. Involved in responses to hyperosmotic conditions, oxidative stress and cell wall destabilization. Also required for proper transcriptional activation of genes involved in aurofusarin biosynthesis. Not involved in pathogenicity, but negatively regulates deoxynivalenol (DON) production. This is Aquaporin-1 from Gibberella zeae (strain ATCC MYA-4620 / CBS 123657 / FGSC 9075 / NRRL 31084 / PH-1) (Wheat head blight fungus).